A 519-amino-acid chain; its full sequence is Exodeoxyribonuclease 7 large subunit (519 aa).

Residues 500 to 519 form a disordered region; the sequence is VGRGKTRKPKEEPPAQGSLL.

This sequence belongs to the XseA family. As to quaternary structure, heterooligomer composed of large and small subunits.

The protein resides in the cytoplasm. It catalyses the reaction Exonucleolytic cleavage in either 5'- to 3'- or 3'- to 5'-direction to yield nucleoside 5'-phosphates.. Functionally, bidirectionally degrades single-stranded DNA into large acid-insoluble oligonucleotides, which are then degraded further into small acid-soluble oligonucleotides. The chain is Exodeoxyribonuclease 7 large subunit from Cereibacter sphaeroides (strain ATCC 17029 / ATH 2.4.9) (Rhodobacter sphaeroides).